Reading from the N-terminus, the 240-residue chain is UDP-2,3-diacylglucosamine hydrolase (240 aa).

Residues Asp-8, His-10, Asp-41, Asn-78, and His-113 each coordinate Mn(2+). Substrate is bound at residue Asn-78–Arg-79. The substrate site is built by Asp-121, Ser-159, Asn-163, Lys-166, and His-194. His-194 and His-196 together coordinate Mn(2+).

It belongs to the LpxH family. Mn(2+) serves as cofactor.

Its subcellular location is the cell inner membrane. It catalyses the reaction UDP-2-N,3-O-bis[(3R)-3-hydroxytetradecanoyl]-alpha-D-glucosamine + H2O = 2-N,3-O-bis[(3R)-3-hydroxytetradecanoyl]-alpha-D-glucosaminyl 1-phosphate + UMP + 2 H(+). The protein operates within glycolipid biosynthesis; lipid IV(A) biosynthesis; lipid IV(A) from (3R)-3-hydroxytetradecanoyl-[acyl-carrier-protein] and UDP-N-acetyl-alpha-D-glucosamine: step 4/6. In terms of biological role, hydrolyzes the pyrophosphate bond of UDP-2,3-diacylglucosamine to yield 2,3-diacylglucosamine 1-phosphate (lipid X) and UMP by catalyzing the attack of water at the alpha-P atom. Involved in the biosynthesis of lipid A, a phosphorylated glycolipid that anchors the lipopolysaccharide to the outer membrane of the cell. The chain is UDP-2,3-diacylglucosamine hydrolase from Shewanella baltica (strain OS223).